The following is a 304-amino-acid chain: Lipoprotein signal peptidase (304 aa).

Helical transmembrane passes span 28–48 (IKIK…IVFV), 86–106 (PAVP…TFIF), and 112–132 (LIVL…DRSV). Catalysis depends on residues D148 and D163. A helical membrane pass occupies residues 163–183 (DICIVTGFALIFLTFVVDIFL).

Belongs to the peptidase A8 family.

Its subcellular location is the cell membrane. The enzyme catalyses Release of signal peptides from bacterial membrane prolipoproteins. Hydrolyzes -Xaa-Yaa-Zaa-|-(S,diacylglyceryl)Cys-, in which Xaa is hydrophobic (preferably Leu), and Yaa (Ala or Ser) and Zaa (Gly or Ala) have small, neutral side chains.. It functions in the pathway protein modification; lipoprotein biosynthesis (signal peptide cleavage). Its function is as follows. This protein specifically catalyzes the removal of signal peptides from prolipoproteins. This chain is Lipoprotein signal peptidase, found in Mycoplasmoides gallisepticum (strain R(low / passage 15 / clone 2)) (Mycoplasma gallisepticum).